We begin with the raw amino-acid sequence, 2028 residues long: Transient receptor potential cation channel subfamily M member 6 (2028 aa).

Over 1-747 (MQVKKSWIEG…MWMGRLKMRK (747 aa)) the chain is Cytoplasmic. Positions 577–601 (QPYKSKEKPEDSQKSKKKSKERQSL) are disordered. The segment covering 580 to 590 (KSKEKPEDSQK) has biased composition (basic and acidic residues). Residues 748-768 (NSWLKIIISILLPPMILTLEF) traverse the membrane as a helical segment. Residues 769–847 (KSKAEMSHVP…YEFYSAPFVK (79 aa)) lie on the Extracellular side of the membrane. Residues 848–868 (FWFYTMAYLAFLMLFTYTVLV) traverse the membrane as a helical segment. At 869-910 (EMQPQPSVHEWLVIIYIFTNAIEKVREICISEPSKFKQKVKM) the chain is on the cytoplasmic side. The chain crosses the membrane as a helical span at residues 911–931 (WLSEYWNLMETVAIGLFAVGF). Residues 932 to 945 (GLRWGHPPLQTAGR) lie on the Extracellular side of the membrane. Residues 946 to 966 (LIYCIDIIFWFSRLMDFFAVN) form a helical membrane-spanning segment. Residues 967–978 (QHAGPYVTMIAK) lie on the Cytoplasmic side of the membrane. Residues 979–999 (MAANMFYIVIIMAIVLLSFGV) form a helical membrane-spanning segment. Residues 1000 to 1018 (ARKAILSPKEPPSWRLARD) are Extracellular-facing. An intramembrane region (pore-forming) is located at residues 1019-1039 (IVFEPYWMMYGEVYASDIDVC). Over 1040 to 1053 (SNETSCPPGSFLTP) the chain is Extracellular. Residues 1054 to 1074 (FLQAVYLFVQYIIMVNLLIAC) traverse the membrane as a helical segment. Residues 1075–2028 (FNNIYLDIKS…RSSLEDHTRL (954 aa)) are Cytoplasmic-facing. Composition is skewed to basic and acidic residues over residues 1313–1323 (KREASHVREEQ) and 1665–1677 (DHLRQPQENRDKT). 2 disordered regions span residues 1313–1339 (KREASHVREEQEEREMEQRTTASGISH) and 1658–1694 (RHTTQASDHLRQPQENRDKTPTWNSGSTSLSRSFLTR). The segment covering 1682-1694 (SGSTSLSRSFLTR) has biased composition (low complexity). Thr-1730 is modified (phosphothreonine; by autocatalysis). The 231-residue stretch at 1756-1986 (TLDKSMSSWS…CCGKLRLPDL (231 aa)) folds into the Alpha-type protein kinase domain. 5 residues coordinate ADP: Gly-1783, Gly-1784, Leu-1785, Arg-1786, and Lys-1810. Thr-1857 bears the Phosphothreonine; by autocatalysis mark. The ADP site is built by Glu-1882 and Met-1885. Position 1915 (His-1915) interacts with Zn(2+). Catalysis depends on Asp-1929, which acts as the Proton acceptor. Asp-1939 provides a ligand contact to ADP. Positions 1972, 1974, and 1978 each coordinate Zn(2+). Positions 2009 to 2028 (TEELPERDKNRSSLEDHTRL) are disordered. Positions 2012-2028 (LPERDKNRSSLEDHTRL) are enriched in basic and acidic residues.

This sequence in the C-terminal section; belongs to the protein kinase superfamily. Alpha-type protein kinase family. ALPK subfamily. The protein in the N-terminal section; belongs to the transient receptor (TC 1.A.4) family. LTrpC subfamily. TRPM6 sub-subfamily. As to quaternary structure, forms heteromers with TRPM7; TRPM6 increases the current amplitude of TRPM6/7 heteromers as compared to TRPM7 homomers. Interacts (via kinase domain) with RACK1. Post-translationally, autophosphorylated; autophosphorylation controls the protein kinase activity of TRPM6 towards their substrates. Autophosphorylation of Thr-1857 in the kinase domain is essential for the inhibitory effect of RACK1. In terms of processing, the C-terminus of TRPM6 is proteolytically cleaved in vivo, in a cell type-specific fashion, releasing the kinase module from the transmembrane domain. The cleaved kinase fragments are translocated to the nucleus to phosphorylate histones and regulate gene expression.

It localises to the cell membrane. Its subcellular location is the apical cell membrane. It is found in the nucleus. It catalyses the reaction L-seryl-[protein] + ATP = O-phospho-L-seryl-[protein] + ADP + H(+). It carries out the reaction L-threonyl-[protein] + ATP = O-phospho-L-threonyl-[protein] + ADP + H(+). The enzyme catalyses Mg(2+)(in) = Mg(2+)(out). The catalysed reaction is Ca(2+)(in) = Ca(2+)(out). It catalyses the reaction Zn(2+)(in) = Zn(2+)(out). Strongly inhibited by intracellular Mg(2+); unlikely to be active at physiological levels of intracellular Mg(2+). In the heteromeric TRPM6-TRPM7 channels complexes, TRPM7 are able to offset the very high sensitivity of TRPM6 to cytosolic Mg(2+) to physiologically relevant concentrations, whereas TRPM6 relieve TRPM7 from the inhibitory action of Mg-ATP. Consequently, the association of TRPM6 with TRPM7 allow for high constitutive activity of TRPM6/7 in the presence of physiological levels of Mg(2+) and Mg-ATP. The kinase activity is controlled through the autophosphorylation of a serine/threonine-rich region located to the N-terminal of the catalytic domain. Functionally, bifunctional protein that combines an ion channel with an intrinsic kinase domain, enabling it to modulate cellular functions either by conducting ions through the pore or by phosphorylating downstream proteins via its kinase domain. Crucial for Mg(2+) homeostasis. Has an important role in epithelial magnesium transport and in the active Mg(2+) absorption in the gut and kidney. However, whether TRPM6 forms functional homomeric channels by itself or functions primarily as a subunit of heteromeric TRPM6-TRPM7 channels, is still under debate. In terms of biological role, the C-terminal kinase domain can be cleaved from the channel segment in a cell-type-specific fashion. The cleaved kinase fragments can translocate to the nucleus, and bind chromatin-remodeling complex proteins to ultimately phosphorylate specific Ser/Thr residues of histones known to be functionally important for cell differentiation and development. The protein is Transient receptor potential cation channel subfamily M member 6 (Trpm6) of Mus musculus (Mouse).